The sequence spans 1230 residues: MDSDNWNFQNNPYFQDYNIGNPNNNTNGINGSSNGTMNLSNSASLFLNKNLGNSDFQPFSLQPSLYLSNSSNNTNNNNNNNNNNNNNNNNNNNNNNNNNNNNNNNIINNNTDEFVFKKISANNLQTPTSPPKDLGFIQTILQHQQELFQKKLSESGVTNLQPDQIQFMFMQEQQKYLTSLNGNDNTLPPLENNFSFQHVNNNNLTSPPQQQQQQQQQQQQQQHQQHQQHQQHQQQQQQQQQQQQQQHQHQQQQQQQQQQQQQQQQQQQQQQLKQQQPQQHPIQSPQPIQSPTPSPSLQQHQTYSYTPSTQQTSLQQLQQQQMQQLLQMSPQHQQQHNQIQQQQAAAAAAALLQQQLAQQQAQQLAQQQQLAQQQLAQQQQQQQQQHVQSLHQAQVQQAHMSQLQQQQLAQQAFQQAQQQQFHQQNIQQHQNQNQQQLQLPQPQQQQHKSTPPTQNTPPVKSPAPQTPTLTTNGKGSKSTPPTTTTTTTTTTSSSSSSSSSSSSSKKKTSNKKTGNLQVPPTPPHHHHHHHNNHHHHHSEGFSDENDEEFIDENEDKSKNKSRSSQNIASRNYRQRKKDHISEVEFKVQQLSLENERLKQENHLLKKGDLGDVMRPDFDFQQVLLESQKLMSQLQDAVNKQDHATIENLLQLYYFASQLRTTVVEREVEKIVHPYTQARLAVMGYRSNAETSILLRPFSTNLWWPKYADEVGLTEEQRKASDILWTDHLKIDMELRTERDQLDREIKELFLKKIVSHGTKRPELLFERETLSTFNSESDYPSSPSSASNSSNSPPTSSPTIITPPDSPLTNNQNNQNNNQMINSNSNNSNNNSHHHHHHHHSHLHGHSPYPVPNGTVHPPPTTAVSEHNKPIELSELLDVTRKLEMLKKNFVKHRNLICDTDLVLSTILTPFQHAKLILRLNSVTCYDFSIVDTITGIWGSINSTLKEGSFIQNLMPDQDGKFEVLEKFKQNQLLDLKGQRPIKLESLQRTYEKLYQTVLGSESPNCQFVKQADYQHQNLLTASPNYTNSPLITSSPSQLTPNSPRPPLDISNNNNNNNNNNNNNNNNNNNNNNNNNNNNNNNNNNNNNNNNNNNNNNSNNNNNTNNNNNNYNNNGNNNNGNNNNGNNNNGNNGNNGNNSNNSNNGNINSVDIQALHQQQKQNLQPQQLQQNQQLQQNQNTPPQQSQQVCSPSSPMTPELNKQPEIVGGDNTNKKNKSKKYQWYSYKTPNI.

Disordered regions lie at residues 65–108 (LYLS…NIIN), 180–233 (LNGN…QQHQ), 270–310 (QQLK…PSTQ), and 422–578 (HQQN…RKKD). Low complexity-rich tracts occupy residues 69 to 108 (NSSN…NIIN), 192 to 233 (NNFS…QQHQ), 270 to 287 (QQLK…SPQP), 295 to 310 (PSLQ…PSTQ), and 422 to 447 (HQQN…QQQH). Composition is skewed to polar residues over residues 448–458 (KSTPPTQNTPP) and 466–475 (TPTLTTNGKG). A compositionally biased stretch (low complexity) spans 476-503 (SKSTPPTTTTTTTTTTSSSSSSSSSSSS). Over residues 523-537 (PHHHHHHHNNHHHHH) the composition is skewed to basic residues. Over residues 541-554 (FSDENDEEFIDENE) the composition is skewed to acidic residues. The region spanning 555-618 (DKSKNKSRSS…LGDVMRPDFD (64 aa)) is the bZIP domain. Residues 556 to 586 (KSKNKSRSSQNIASRNYRQRKKDHISEVEFK) form a basic motif region. Positions 562 to 571 (RSSQNIASRN) are enriched in polar residues. The interval 590-604 (LSLENERLKQENHLL) is leucine-zipper. A coiled-coil region spans residues 728–753 (LKIDMELRTERDQLDREIKELFLKKI). Disordered stretches follow at residues 772-869 (TFNS…EHNK) and 1025-1230 (NYTN…TPNI). 2 stretches are compositionally biased toward low complexity: residues 774 to 803 (NSES…IITP) and 810 to 831 (NNQN…SNNN). The span at 832–845 (SHHHHHHHHSHLHG) shows a compositional bias: basic residues. Polar residues predominate over residues 1025 to 1042 (NYTNSPLITSSPSQLTPN). Low complexity-rich tracts occupy residues 1052–1146 (NNNN…NNGN) and 1153–1193 (QALH…SPSS).

Belongs to the bZIP family. In terms of assembly, binds DNA as a dimer. Heterodimerizes with dimB; in vitro. Also able to form homodimer; in vitro.

Its subcellular location is the nucleus. Transcriptional regulator involved in DIF-1 signaling. DIF-1 (Differentiation Inducing Factor-1) is a signal molecule involved in the differentiation of pstO (prestalk-O) cells. Functions both as an activator of prestalk gene expression and a repressor of prespore gene expression. This chain is Basic-leucine zipper transcription factor A (dimA), found in Dictyostelium discoideum (Social amoeba).